A 490-amino-acid polypeptide reads, in one-letter code: Cysteine protease 1 (490 aa).

A signal peptide spans 1–31; that stretch reads MAGGGGKSVAAALAMACFLLILAAFAPPAAA. The propeptide at 32 to 154 is activation peptide; the sequence is APPDIMSIIR…EAYRHDGVEA (123 aa). Cystine bridges form between Cys177/Cys220, Cys211/Cys253, Cys311/Cys364, Cys395/Cys407, and Cys401/Cys422. The active site involves Cys180. Residues His317 and Asn339 contribute to the active site. N-linked (GlcNAc...) asparagine glycosylation is present at Asn356. Residues 379–490 constitute a propeptide, removed in mature form; it reads NPKPSPPSPA…FVVLNREDLV (112 aa).

Belongs to the peptidase C1 family. In terms of tissue distribution, highly expressed in the tapetum and developing pollen of the anther locules. Weakly expressed in root and germinating seed, hardly in the anther-less-flower and not detected in leaf.

Cysteine protease that may play a role in pollen development. May be regulated by the transcription factor UDT1 in developing anthers and play a role in tapetum development. Positively regulated by the transcription factor TDR in developing anthers and may play a role in tapetum programmed cell death (PCD). In Oryza sativa subsp. japonica (Rice), this protein is Cysteine protease 1 (CP1).